Reading from the N-terminus, the 88-residue chain is uncharacterized protein (88 aa).

This is an uncharacterized protein from Bacillus subtilis (strain 168).